A 107-amino-acid chain; its full sequence is Ferredoxin Fdx8 (107 aa).

4Fe-4S ferredoxin-type domains lie at 1–31 (MAYV…GPLA) and 50–79 (LQLY…DEDE). [4Fe-4S] cluster contacts are provided by Cys-9, Cys-13, Cys-17, Cys-21, Cys-59, Cys-62, Cys-65, and Cys-69.

Requires [4Fe-4S] cluster as cofactor.

In terms of biological role, ferredoxins are iron-sulfur proteins that transfer electrons in a wide variety of metabolic reactions. Fdx2 can receive electrons from both FdR_A and FdR_B ferredoxin reductases, with a preference for FdR_B compared with FdR_A, and transfer the electrons to the cytochrome P450 CYP260A1. This is Ferredoxin Fdx8 from Sorangium cellulosum (strain So ce56) (Polyangium cellulosum (strain So ce56)).